A 245-amino-acid chain; its full sequence is 2,3-bisphosphoglycerate-dependent phosphoglycerate mutase (245 aa).

Residues 8–15 (RHGQSLWN), 21–22 (TG), Arg60, 87–90 (ERHY), Lys98, 114–115 (RR), and 183–184 (GN) each bind substrate. Catalysis depends on His9, which acts as the Tele-phosphohistidine intermediate. Glu87 functions as the Proton donor/acceptor in the catalytic mechanism.

Belongs to the phosphoglycerate mutase family. BPG-dependent PGAM subfamily.

It catalyses the reaction (2R)-2-phosphoglycerate = (2R)-3-phosphoglycerate. The protein operates within carbohydrate degradation; glycolysis; pyruvate from D-glyceraldehyde 3-phosphate: step 3/5. Functionally, catalyzes the interconversion of 2-phosphoglycerate and 3-phosphoglycerate. The protein is 2,3-bisphosphoglycerate-dependent phosphoglycerate mutase of Bacillus cereus (strain ZK / E33L).